Here is a 28-residue protein sequence, read N- to C-terminus: GKCGDINAPCKAECDCCGYTTCDCYWGN.

2 cysteine pairs are disulfide-bonded: Cys3–Cys17 and Cys10–Cys22.

In terms of tissue distribution, expressed by the venom gland.

Its subcellular location is the secreted. In terms of biological role, insecticidal neurotoxin that reversibly inhibits the N-methyl-D-aspartate (NMDA)-subtype of ionotropic glutamate receptor (GRIN) and inhibits inactivation of insect sodium channels (Nav). In vivo, is highly toxic to insects. The protein is U15-ctenitoxin-Co1a of Ctenus ornatus (Brazilian spider).